A 454-amino-acid polypeptide reads, in one-letter code: Bifunctional protein GlmU (454 aa).

The segment at methionine 1–arginine 226 is pyrophosphorylase. Residues leucine 8–glycine 11, lysine 22, glutamine 73, glycine 78–threonine 79, tyrosine 100–aspartate 102, glycine 137, glutamate 151, asparagine 166, and asparagine 224 contribute to the UDP-N-acetyl-alpha-D-glucosamine site. Aspartate 102 contributes to the Mg(2+) binding site. Asparagine 224 serves as a coordination point for Mg(2+). A linker region spans residues leucine 227–glutamine 247. The segment at glycine 248–lysine 454 is N-acetyltransferase. Arginine 330 and lysine 348 together coordinate UDP-N-acetyl-alpha-D-glucosamine. The active-site Proton acceptor is the histidine 360. UDP-N-acetyl-alpha-D-glucosamine contacts are provided by tyrosine 363 and asparagine 374. Acetyl-CoA-binding positions include alanine 377, asparagine 383 to tyrosine 384, serine 402, alanine 420, and arginine 437.

In the N-terminal section; belongs to the N-acetylglucosamine-1-phosphate uridyltransferase family. It in the C-terminal section; belongs to the transferase hexapeptide repeat family. Homotrimer. Mg(2+) serves as cofactor.

Its subcellular location is the cytoplasm. The catalysed reaction is alpha-D-glucosamine 1-phosphate + acetyl-CoA = N-acetyl-alpha-D-glucosamine 1-phosphate + CoA + H(+). It carries out the reaction N-acetyl-alpha-D-glucosamine 1-phosphate + UTP + H(+) = UDP-N-acetyl-alpha-D-glucosamine + diphosphate. The protein operates within nucleotide-sugar biosynthesis; UDP-N-acetyl-alpha-D-glucosamine biosynthesis; N-acetyl-alpha-D-glucosamine 1-phosphate from alpha-D-glucosamine 6-phosphate (route II): step 2/2. Its pathway is nucleotide-sugar biosynthesis; UDP-N-acetyl-alpha-D-glucosamine biosynthesis; UDP-N-acetyl-alpha-D-glucosamine from N-acetyl-alpha-D-glucosamine 1-phosphate: step 1/1. It participates in bacterial outer membrane biogenesis; LPS lipid A biosynthesis. In terms of biological role, catalyzes the last two sequential reactions in the de novo biosynthetic pathway for UDP-N-acetylglucosamine (UDP-GlcNAc). The C-terminal domain catalyzes the transfer of acetyl group from acetyl coenzyme A to glucosamine-1-phosphate (GlcN-1-P) to produce N-acetylglucosamine-1-phosphate (GlcNAc-1-P), which is converted into UDP-GlcNAc by the transfer of uridine 5-monophosphate (from uridine 5-triphosphate), a reaction catalyzed by the N-terminal domain. This is Bifunctional protein GlmU from Acinetobacter baumannii (strain AYE).